We begin with the raw amino-acid sequence, 184 residues long: Cell number regulator 5 (184 aa).

Residues 91–111 (MLWGLLTSLCCVFTGGLVLAV) form a helical membrane-spanning segment. Residues 162 to 184 (RTGSGSSPAPNVTPPPVQTMDEL) are disordered.

It belongs to the cornifelin family. In terms of tissue distribution, expressed in roots, leaves, stalks, immature ears, endosperm and pollen.

Its subcellular location is the membrane. The chain is Cell number regulator 5 (CNR5) from Zea mays (Maize).